The primary structure comprises 190 residues: MDRKEQKSIIEGLLFVSGDEGIYPEQIAKVLEIEMNEAINILEEMQQECEGANRGLQIVQYAKVYRFATKKEHASYYQKLIDTPTAASLSQAALETLAIVAYRQPITRTEMEEIRGVKTDKALQTLVSHLLIKEMGRAEGPGRPILYGTTKEFLDTFGLKTLDDLPPLSEENEQMNEADLFFGCLQEIWK.

This sequence belongs to the ScpB family. Homodimer. Homodimerization may be required to stabilize the binding of ScpA to the Smc head domains. Component of a cohesin-like complex composed of ScpA, ScpB and the Smc homodimer, in which ScpA and ScpB bind to the head domain of Smc. The presence of the three proteins is required for the association of the complex with DNA.

It is found in the cytoplasm. Functionally, participates in chromosomal partition during cell division. May act via the formation of a condensin-like complex containing Smc and ScpA that pull DNA away from mid-cell into both cell halves. The chain is Segregation and condensation protein B from Bacillus cereus (strain ATCC 14579 / DSM 31 / CCUG 7414 / JCM 2152 / NBRC 15305 / NCIMB 9373 / NCTC 2599 / NRRL B-3711).